Reading from the N-terminus, the 270-residue chain is NAD(P)H-hydrate epimerase (270 aa).

The 210-residue stretch at phenylalanine 25–glutamine 234 folds into the YjeF N-terminal domain. Aspartate 73–glutamine 77 is a binding site for (6S)-NADPHX. K(+) contacts are provided by asparagine 74 and aspartate 144. (6S)-NADPHX-binding positions include glycine 148–histidine 154 and glutamate 177. Threonine 180 contributes to the K(+) binding site.

This sequence belongs to the NnrE/AIBP family. Requires K(+) as cofactor.

It catalyses the reaction (6R)-NADHX = (6S)-NADHX. The catalysed reaction is (6R)-NADPHX = (6S)-NADPHX. In terms of biological role, catalyzes the epimerization of the S- and R-forms of NAD(P)HX, a damaged form of NAD(P)H that is a result of enzymatic or heat-dependent hydration. This is a prerequisite for the S-specific NAD(P)H-hydrate dehydratase to allow the repair of both epimers of NAD(P)HX. This chain is NAD(P)H-hydrate epimerase, found in Legionella pneumophila (strain Corby).